The sequence spans 238 residues: Pyridoxine 5'-phosphate synthase (238 aa).

Asparagine 7 provides a ligand contact to 3-amino-2-oxopropyl phosphate. A 1-deoxy-D-xylulose 5-phosphate-binding site is contributed by 9–10 (DH). 3-amino-2-oxopropyl phosphate is bound at residue arginine 18. The active-site Proton acceptor is histidine 43. Residues arginine 45 and histidine 50 each contribute to the 1-deoxy-D-xylulose 5-phosphate site. Glutamate 70 serves as the catalytic Proton acceptor. 1-deoxy-D-xylulose 5-phosphate is bound at residue threonine 100. Histidine 190 serves as the catalytic Proton donor. 3-amino-2-oxopropyl phosphate-binding positions include glycine 191 and 212-213 (GH).

Belongs to the PNP synthase family. Homooctamer; tetramer of dimers.

It localises to the cytoplasm. The catalysed reaction is 3-amino-2-oxopropyl phosphate + 1-deoxy-D-xylulose 5-phosphate = pyridoxine 5'-phosphate + phosphate + 2 H2O + H(+). Its pathway is cofactor biosynthesis; pyridoxine 5'-phosphate biosynthesis; pyridoxine 5'-phosphate from D-erythrose 4-phosphate: step 5/5. Functionally, catalyzes the complicated ring closure reaction between the two acyclic compounds 1-deoxy-D-xylulose-5-phosphate (DXP) and 3-amino-2-oxopropyl phosphate (1-amino-acetone-3-phosphate or AAP) to form pyridoxine 5'-phosphate (PNP) and inorganic phosphate. In Prochlorococcus marinus (strain AS9601), this protein is Pyridoxine 5'-phosphate synthase.